Reading from the N-terminus, the 258-residue chain is Ribosomal RNA small subunit methyltransferase A (258 aa).

6 residues coordinate S-adenosyl-L-methionine: histidine 13, leucine 15, glycine 40, glutamate 61, aspartate 86, and asparagine 106.

It belongs to the class I-like SAM-binding methyltransferase superfamily. rRNA adenine N(6)-methyltransferase family. RsmA subfamily.

The protein resides in the cytoplasm. It catalyses the reaction adenosine(1518)/adenosine(1519) in 16S rRNA + 4 S-adenosyl-L-methionine = N(6)-dimethyladenosine(1518)/N(6)-dimethyladenosine(1519) in 16S rRNA + 4 S-adenosyl-L-homocysteine + 4 H(+). Its function is as follows. Specifically dimethylates two adjacent adenosines (A1518 and A1519) in the loop of a conserved hairpin near the 3'-end of 16S rRNA in the 30S particle. May play a critical role in biogenesis of 30S subunits. The protein is Ribosomal RNA small subunit methyltransferase A of Coxiella burnetii (strain Dugway 5J108-111).